The following is a 337-amino-acid chain: Mitochondrial amidoxime-reducing component 1 (337 aa).

Residue Gly2 is the site of N-myristoyl glycine attachment. Over 2–20 (GAAGSSALARFVLLAQSRP) the chain is Mitochondrial matrix. A helical; Signal-anchor for type II membrane protein transmembrane segment spans residues 21–40 (GWLGVAALGLTAVALGAVAW). The Cytoplasmic portion of the chain corresponds to 41-337 (RRAWPTRRRR…VGDPVYLLGQ (297 aa)). Residues Lys67, Ser68, and Arg92 each coordinate Mo-molybdopterin. Residues 93 to 183 (FWLVINQEGN…KSQPYRLVHF (91 aa)) are MOSC N-terminal region. The region spanning 187–335 (MRPRRPHQIA…IKVGDPVYLL (149 aa)) is the MOSC domain. Mo-molybdopterin contacts are provided by Thr210, Ser211, Arg238, Asn240, Ser271, Arg272, Cys273, and Tyr317.

Component of a complex composed of cytochrome b5, NADH-cytochrome b5 reductase and MTARC1. Mo-molybdopterin serves as cofactor.

It localises to the mitochondrion outer membrane. The protein resides in the membrane. It catalyses the reaction N(omega)-hydroxy-L-arginine + 2 Fe(II)-[cytochrome b5] + 2 H(+) = L-arginine + 2 Fe(III)-[cytochrome b5] + H2O. Functionally, catalyzes the reduction of N-oxygenated molecules, acting as a counterpart of cytochrome P450 and flavin-containing monooxygenases in metabolic cycles. As a component of prodrug-converting system, reduces a multitude of N-hydroxylated prodrugs particularly amidoximes, leading to increased drug bioavailability. May be involved in mitochondrial N(omega)-hydroxy-L-arginine (NOHA) reduction, regulating endogenous nitric oxide levels and biosynthesis. Postulated to cleave the N-OH bond of N-hydroxylated substrates in concert with electron transfer from NADH to cytochrome b5 reductase then to cytochrome b5, the ultimate electron donor that primes the active site for substrate reduction. This chain is Mitochondrial amidoxime-reducing component 1, found in Homo sapiens (Human).